The chain runs to 278 residues: uncharacterized protein (278 aa).

The protein belongs to the short-chain dehydrogenases/reductases (SDR) family.

This is an uncharacterized protein from Bacillus subtilis (strain 168).